We begin with the raw amino-acid sequence, 546 residues long: MFS-type transporter GME11371 (546 aa).

7 consecutive transmembrane segments (helical) span residues 39–59 (LTYL…DLTI), 77–96 (IGWY…SSWG), 107–127 (MFLL…AAPT), 137–157 (ITGI…AFAV), 167–187 (GGLA…GGVL), 195–215 (WCFY…FLFF), and 240–260 (FPGF…LLWG). Asn267 is a glycosylation site (N-linked (GlcNAc...) asparagine). Helical transmembrane passes span 270-290 (DVIG…VVEW), 307-327 (VVLF…VLVY), 349-369 (LPYI…ISAT), 370-390 (GYFT…AGLI), 402-422 (WIGY…PPIL), 433-453 (VAAT…FMVS), and 509-529 (ISFA…IFMP).

It belongs to the major facilitator superfamily.

It localises to the cell membrane. The protein operates within secondary metabolite biosynthesis. Functionally, MFS-type transporter; part of the gene cluster that mediates the biosynthesis of dibenzodioxocinones such as pestalotiollide B, a novel class of inhibitors against cholesterol ester transfer protein (CEPT). essential for dibenzodioxocinones biosynthesis and may be involved in the secretion of the cluster products. This Pestalotiopsis microspora protein is MFS-type transporter GME11371.